Consider the following 183-residue polypeptide: Adenine phosphoribosyltransferase (183 aa).

Belongs to the purine/pyrimidine phosphoribosyltransferase family. In terms of assembly, homodimer.

It localises to the cytoplasm. The catalysed reaction is AMP + diphosphate = 5-phospho-alpha-D-ribose 1-diphosphate + adenine. Its pathway is purine metabolism; AMP biosynthesis via salvage pathway; AMP from adenine: step 1/1. Catalyzes a salvage reaction resulting in the formation of AMP, that is energically less costly than de novo synthesis. The chain is Adenine phosphoribosyltransferase from Shigella flexneri serotype 5b (strain 8401).